The sequence spans 154 residues: PTTG1IP family member 2 (154 aa).

The first 26 residues, Met-1–Ser-26, serve as a signal peptide directing secretion. Residues Phe-27–Asp-97 lie on the Extracellular side of the membrane. Residues Met-98–Cys-118 form a helical membrane-spanning segment. Residues Cys-119–Glu-154 are Cytoplasmic-facing.

Its subcellular location is the membrane. The sequence is that of PTTG1IP family member 2 from Homo sapiens (Human).